A 206-amino-acid polypeptide reads, in one-letter code: Small ribosomal subunit protein uS4 (206 aa).

Residues 96–156 enclose the S4 RNA-binding domain; the sequence is GRLDNVVYRM…EKSKKQARIK (61 aa).

The protein belongs to the universal ribosomal protein uS4 family. As to quaternary structure, part of the 30S ribosomal subunit. Contacts protein S5. The interaction surface between S4 and S5 is involved in control of translational fidelity.

Functionally, one of the primary rRNA binding proteins, it binds directly to 16S rRNA where it nucleates assembly of the body of the 30S subunit. In terms of biological role, with S5 and S12 plays an important role in translational accuracy. In Histophilus somni (strain 2336) (Haemophilus somnus), this protein is Small ribosomal subunit protein uS4.